A 128-amino-acid polypeptide reads, in one-letter code: Small ribosomal subunit protein uS14m (128 aa).

Belongs to the universal ribosomal protein uS14 family. Component of the mitochondrial ribosome small subunit (28S) which comprises a 12S rRNA and about 30 distinct proteins. Interacts with LIAT1.

Its subcellular location is the mitochondrion. This Bos taurus (Bovine) protein is Small ribosomal subunit protein uS14m (MRPS14).